We begin with the raw amino-acid sequence, 114 residues long: Nascent polypeptide-associated complex protein (114 aa).

The region spanning 5–69 (PSQFKNLERM…AKEAQKEEPK (65 aa)) is the NAC-A/B domain.

The protein belongs to the NAC-alpha family. Homodimer. Interacts with the ribosome. Binds ribosomal RNA.

In terms of biological role, contacts the emerging nascent chain on the ribosome. This is Nascent polypeptide-associated complex protein from Sulfurisphaera tokodaii (strain DSM 16993 / JCM 10545 / NBRC 100140 / 7) (Sulfolobus tokodaii).